Here is a 195-residue protein sequence, read N- to C-terminus: Molybdenum cofactor guanylyltransferase (195 aa).

GTP is bound by residues 12–14 (LAG), lysine 25, asparagine 53, aspartate 70, and aspartate 100. Mg(2+) is bound at residue aspartate 100.

It belongs to the MobA family. As to quaternary structure, monomer. Requires Mg(2+) as cofactor.

It is found in the cytoplasm. The catalysed reaction is Mo-molybdopterin + GTP + H(+) = Mo-molybdopterin guanine dinucleotide + diphosphate. In terms of biological role, transfers a GMP moiety from GTP to Mo-molybdopterin (Mo-MPT) cofactor (Moco or molybdenum cofactor) to form Mo-molybdopterin guanine dinucleotide (Mo-MGD) cofactor. In Vibrio vulnificus (strain YJ016), this protein is Molybdenum cofactor guanylyltransferase.